The sequence spans 639 residues: 1-deoxy-D-xylulose-5-phosphate synthase (639 aa).

Thiamine diphosphate contacts are provided by residues His79 and 120–122 (GHS). Asp151 serves as a coordination point for Mg(2+). Thiamine diphosphate is bound by residues 152–153 (GG), Asn180, Tyr288, and Glu370. Residue Asn180 coordinates Mg(2+).

This sequence belongs to the transketolase family. DXPS subfamily. As to quaternary structure, homodimer. Mg(2+) is required as a cofactor. It depends on thiamine diphosphate as a cofactor.

The catalysed reaction is D-glyceraldehyde 3-phosphate + pyruvate + H(+) = 1-deoxy-D-xylulose 5-phosphate + CO2. The protein operates within metabolic intermediate biosynthesis; 1-deoxy-D-xylulose 5-phosphate biosynthesis; 1-deoxy-D-xylulose 5-phosphate from D-glyceraldehyde 3-phosphate and pyruvate: step 1/1. Catalyzes the acyloin condensation reaction between C atoms 2 and 3 of pyruvate and glyceraldehyde 3-phosphate to yield 1-deoxy-D-xylulose-5-phosphate (DXP). The protein is 1-deoxy-D-xylulose-5-phosphate synthase of Methylococcus capsulatus (strain ATCC 33009 / NCIMB 11132 / Bath).